We begin with the raw amino-acid sequence, 62 residues long: Amolopin-p-MT1 (62 aa).

Residues 1 to 22 (MFTLKKSLLLLFFLGTISLSLC) form the signal peptide. A propeptide spans 23–42 (EQERGADEEENGGEVTEEEV) (removed in mature form).

It belongs to the frog skin active peptide (FSAP) family. Brevinin subfamily. As to expression, expressed by the skin glands.

The protein resides in the secreted. Functionally, antimicrobial peptide. Active against a variety of Gram-negative and Gram-positive bacterial strains. Not active against fungi. Shows weak hemolytic activity against human erythrocytes. This is Amolopin-p-MT1 from Amolops mantzorum (Sichuan torrent frog).